We begin with the raw amino-acid sequence, 933 residues long: Thyroid peroxidase (933 aa).

A signal peptide spans 1-18; sequence MRALAVLSVTLVMACTEA. The Extracellular segment spans residues 19–846; the sequence is FFPFISRGKE…TCVDSGRLPR (828 aa). Asn-129 is a glycosylation site (N-linked (GlcNAc...) asparagine). Cys-142 and Cys-158 are joined by a disulfide. Asp-238 provides a ligand contact to heme b. The active-site Proton acceptor is His-239. Ca(2+) is bound at residue Asp-240. 2 disulfides stabilise this stretch: Cys-259–Cys-269 and Cys-263–Cys-286. The N-linked (GlcNAc...) asparagine glycan is linked to Asn-307. Positions 321, 323, 325, and 327 each coordinate Ca(2+). Asn-342 is a glycosylation site (N-linked (GlcNAc...) asparagine). Positions 399 and 494 each coordinate heme b. An N-linked (GlcNAc...) asparagine glycan is attached at Asn-569. Intrachain disulfides connect Cys-598–Cys-655 and Cys-696–Cys-721. Positions 740-795 constitute a Sushi domain; sequence DKCGFPESVENGDFVHCEESGRRVLVYSCRHGYELQGREQLTCTQEGWDFQPPLCK. The EGF-like; calcium-binding domain maps to 796–839; it reads DVNECADGAHPPCHASARCRNTKGGFQCLCADPYELGDDGRTCV. 3 disulfide bridges follow: Cys-800–Cys-814, Cys-808–Cys-823, and Cys-825–Cys-838. The chain crosses the membrane as a helical span at residues 847–871; sequence VTWISMSLAALLIGGFAGLTSTVIC. The Cytoplasmic portion of the chain corresponds to 872–933; that stretch reads RWTRTGTKST…RDTHRLPRAL (62 aa). The interval 881–933 is disordered; sequence TLPISETGGGTPELRCGKHQAVGTSPQRAAAQDSEQESAGMEGRDTHRLPRAL. Over residues 922–933 the composition is skewed to basic and acidic residues; that stretch reads EGRDTHRLPRAL.

Belongs to the peroxidase family. XPO subfamily. As to quaternary structure, interacts with DUOX1, DUOX2 and CYBA. It depends on Ca(2+) as a cofactor. Heme b is required as a cofactor. Glycosylated. Post-translationally, heme is covalently bound through a H(2)O(2)-dependent autocatalytic process. Heme insertion is important for the delivery of protein at the cell surface. In terms of processing, cleaved in its N-terminal part.

The protein resides in the membrane. It is found in the cell surface. It catalyses the reaction 2 iodide + H2O2 + 2 H(+) = diiodine + 2 H2O. The enzyme catalyses [thyroglobulin]-L-tyrosine + iodide + H2O2 + H(+) = [thyroglobulin]-3-iodo-L-tyrosine + 2 H2O. It carries out the reaction [thyroglobulin]-3-iodo-L-tyrosine + iodide + H2O2 + H(+) = [thyroglobulin]-3,5-diiodo-L-tyrosine + 2 H2O. The catalysed reaction is 2 [thyroglobulin]-3,5-diiodo-L-tyrosine + H2O2 = [thyroglobulin]-L-thyroxine + [thyroglobulin]-dehydroalanine + 2 H2O. It catalyses the reaction [thyroglobulin]-3-iodo-L-tyrosine + [thyroglobulin]-3,5-diiodo-L-tyrosine + H2O2 = [thyroglobulin]-3,3',5-triiodo-L-thyronine + [thyroglobulin]-dehydroalanine + 2 H2O. It participates in hormone biosynthesis; thyroid hormone biosynthesis. Its function is as follows. Iodination and coupling of the hormonogenic tyrosines in thyroglobulin to yield the thyroid hormones T(3) and T(4). The polypeptide is Thyroid peroxidase (Homo sapiens (Human)).